We begin with the raw amino-acid sequence, 558 residues long: Probable rhamnogalacturonase B (558 aa).

A signal peptide spans 1–21 (MLLDKLSVLSFLGLAPIFAAA). Cysteines 42 and 68 form a disulfide. An N-linked (GlcNAc...) asparagine glycan is attached at asparagine 145. Aspartate 219 acts as the Proton donor in catalysis. Cysteine 221 and cysteine 238 are joined by a disulfide. N-linked (GlcNAc...) asparagine glycans are attached at residues asparagine 239 and asparagine 254. Histidine 294 is a catalytic residue. N-linked (GlcNAc...) asparagine glycosylation is present at asparagine 321. 2 cysteine pairs are disulfide-bonded: cysteine 344–cysteine 350 and cysteine 372–cysteine 381. Positions 503-526 (VGAQEGSTTSAPSFAAPSGAGNSP) are enriched in low complexity. A disordered region spans residues 503 to 558 (VGAQEGSTTSAPSFAAPSGAGNSPQGPTGASGFGEKGQQGEQGEQGEQGEQGVCYV).

This sequence belongs to the glycosyl hydrolase 28 family.

The protein resides in the secreted. It carries out the reaction Endohydrolysis of alpha-D-GalA-(1-&gt;2)-alpha-L-Rha glycosidic bond in the rhamnogalacturonan I backbone with initial inversion of anomeric configuration releasing oligosaccharides with beta-D-GalA at the reducing end.. Functionally, pectinolytic enzymes consist of four classes of enzymes: pectine lyase, polygalacturonase, pectin methylesterase and rhamnogalacturonase. Hydrolyzes alpha-D-galacturonopyranosyl-(1,2)-alpha-L-rhamnopyranosyl linkages in the backbone of the hairy regions of pectins. The protein is Probable rhamnogalacturonase B (rhgB) of Aspergillus niger (strain ATCC MYA-4892 / CBS 513.88 / FGSC A1513).